We begin with the raw amino-acid sequence, 642 residues long: Threonine--tRNA ligase (642 aa).

One can recognise a TGS domain in the interval 1-61 (MPVITLPDGS…ETDAELSIIT (61 aa)). The segment at 243 to 534 (DHRKIGKQLD…LIEEYAGRFP (292 aa)) is catalytic. Zn(2+) contacts are provided by Cys334, His385, and His511.

The protein belongs to the class-II aminoacyl-tRNA synthetase family. As to quaternary structure, homodimer. The cofactor is Zn(2+).

The protein resides in the cytoplasm. The enzyme catalyses tRNA(Thr) + L-threonine + ATP = L-threonyl-tRNA(Thr) + AMP + diphosphate + H(+). Functionally, catalyzes the attachment of threonine to tRNA(Thr) in a two-step reaction: L-threonine is first activated by ATP to form Thr-AMP and then transferred to the acceptor end of tRNA(Thr). Also edits incorrectly charged L-seryl-tRNA(Thr). This Shewanella sp. (strain W3-18-1) protein is Threonine--tRNA ligase.